Here is a 455-residue protein sequence, read N- to C-terminus: Inactive peptidyl-prolyl cis-trans isomerase shutdown (455 aa).

Residues 34-54 (SQQNHARDLGLDSDSDSDYED) form a disordered region. Residues 44–54 (LDSDSDSDYED) show a composition bias toward acidic residues. The PPIase FKBP-type domain maps to 103-192 (KARVSVRYSG…LFKVEVIDYS (90 aa)). TPR repeat units follow at residues 218-251 (AVDLHLHGKDSVKLGRYQSAATAFERAVSSLNYC) and 303-336 (CKALFQEGRALAALGEYNLARNAYLQAQAKQPAN).

This sequence belongs to the FKBP6 family. Interacts with Hsp83. As to expression, strongly expressed in the germline stem cells and in 16-cell cysts. Present in the germ cells throughout embryogenesis. Defects are due to derepression of transposable elements and impaired piRNA biogenesis.

It localises to the cytoplasm. The protein localises to the cytoplasmic ribonucleoprotein granule. Co-chaperone required during oogenesis to repress transposable elements and prevent their mobilization, which is essential for the germline integrity. Acts via the piRNA metabolic process, which mediates the repression of transposable elements during meiosis by forming complexes composed of piRNAs and Piwi proteins and govern the methylation and subsequent repression of transposons. Acts as a co-chaperone via its interaction with Hsp83/HSP90 and is required for the biogenesis of all three piRNA major populations. The chain is Inactive peptidyl-prolyl cis-trans isomerase shutdown from Drosophila melanogaster (Fruit fly).